We begin with the raw amino-acid sequence, 147 residues long: Ubiquitin-conjugating enzyme E2 D3 (147 aa).

In terms of domain architecture, UBC core spans 1–147 (MALKRINKEL…SREWTQKYAM (147 aa)). The cysteines at positions 21 and 107 are disulfide-linked. Cys85 acts as the Glycyl thioester intermediate in catalysis.

This sequence belongs to the ubiquitin-conjugating enzyme family. Interacts with SCF (SKP1-CUL1-F-box protein) E3 ubiquitin ligase complex; when Cullin is neddylated, the interaction between the E2 and the SCF complex is strengthened. Interacts with DAPK3. Interacts with BRCA1; the DNA damage checkpoint promotes the association with BRCA1 after ionizing radiation. Interacts non-covalently with ubiquitin. Interacts with E3 ubiquitin-protein ligase CBLC. Interacts with UBTD1. Interacts with RIGI and RNF135; involved in RIGI ubiquitination and activation. In terms of processing, phosphorylated by AURKB.

It is found in the cell membrane. The protein localises to the endosome membrane. It carries out the reaction S-ubiquitinyl-[E1 ubiquitin-activating enzyme]-L-cysteine + [E2 ubiquitin-conjugating enzyme]-L-cysteine = [E1 ubiquitin-activating enzyme]-L-cysteine + S-ubiquitinyl-[E2 ubiquitin-conjugating enzyme]-L-cysteine.. The catalysed reaction is S-ubiquitinyl-[E1 ubiquitin-activating enzyme]-L-cysteine + [acceptor protein]-L-lysine = [E1 ubiquitin-activating enzyme]-L-cysteine + N(6)-monoubiquitinyl-[acceptor protein]-L-lysine.. The protein operates within protein modification; protein ubiquitination. Functionally, accepts ubiquitin from the E1 complex and catalyzes its covalent attachment to other proteins. In vitro catalyzes 'Lys-11'-, as well as 'Lys-48'-linked polyubiquitination. Cooperates with the E2 CDC34 and the SCF(FBXW11) E3 ligase complex for the polyubiquitination of NFKBIA leading to its subsequent proteasomal degradation. Acts as an initiator E2, priming the phosphorylated NFKBIA target at positions 'Lys-21' and/or 'Lys-22' with a monoubiquitin. Ubiquitin chain elongation is then performed by CDC34, building ubiquitin chains from the UBE2D3-primed NFKBIA-linked ubiquitin. Also acts as an initiator E2, in conjunction with RNF8, for the priming of PCNA. Monoubiquitination of PCNA, and its subsequent polyubiquitination, are essential events in the operation of the DNA damage tolerance (DDT) pathway that is activated after DNA damage caused by UV or chemical agents during S-phase. Associates with the BRCA1/BARD1 E3 ligase complex to perform ubiquitination at DNA damage sites following ionizing radiation leading to DNA repair. Targets DAPK3 for ubiquitination which influences promyelocytic leukemia protein nuclear body (PML-NB) formation in the nucleus. In conjunction with the MDM2 and TOPORS E3 ligases, functions ubiquitination of p53/TP53. In conjunction with the CBL E3 ligase, targets EGFR for polyubiquitination at the plasma membrane as well as during its internalization and transport on endosomes. In conjunction with the STUB1 E3 quality control E3 ligase, ubiquitinates unfolded proteins to catalyze their immediate destruction. Together with RNF135, catalyzes the viral RNA-dependent 'Lys-63'-linked polyubiquitination of RIGI to activate the downstream signaling pathway that leads to interferon beta production. Together with ZNF598, catalyzes ubiquitination of 40S ribosomal proteins in response to ribosome collisions. In cooperation with the GATOR2 complex, catalyzes 'Lys-6'-linked ubiquitination of NPRL2. The chain is Ubiquitin-conjugating enzyme E2 D3 (UBE2D3) from Homo sapiens (Human).